Here is a 180-residue protein sequence, read N- to C-terminus: Pro-glucagon (180 aa).

The first 20 residues, Met1–Gln20, serve as a signal peptide directing secretion. Residues Thr26–Thr59 form a disordered region. Position 54 is a phosphoserine (Ser54). A propeptide spanning residues Asn84 to Ala89 is cleaved from the precursor. Phosphoserine is present on residues Ser105 and Ser108. An Arginine amide modification is found at Arg127. Positions Asp131 to Arg145 are excised as a propeptide. 2 positions are modified to phosphoserine: Ser150 and Ser152.

The protein belongs to the glucagon family. Proglucagon is post-translationally processed in a tissue-specific manner in pancreatic A cells and intestinal L cells. In pancreatic A cells, the major bioactive hormone is glucagon cleaved by PCSK2/PC2. In the intestinal L cells PCSK1/PC1 liberates GLP-1, GLP-2, glicentin and oxyntomodulin. GLP-1 is further N-terminally truncated by post-translational processing in the intestinal L cells resulting in GLP-1(7-37) GLP-1-(7-36)amide. The C-terminal amidation is neither important for the metabolism of GLP-1 nor for its effects on the endocrine pancreas. Secreted in the A cells of the islets of Langerhans. As to expression, secreted in the A cells of the islets of Langerhans. Secreted from enteroendocrine L cells throughout the gastrointestinal tract. Also secreted in selected neurons in the brain. In terms of tissue distribution, secreted from enteroendocrine cells throughout the gastrointestinal tract. Also secreted in selected neurons in the brain. Secreted from enteroendocrine cells throughout the gastrointestinal tract.

Its subcellular location is the secreted. Functionally, plays a key role in glucose metabolism and homeostasis. Regulates blood glucose by increasing gluconeogenesis and decreasing glycolysis. A counterregulatory hormone of insulin, raises plasma glucose levels in response to insulin-induced hypoglycemia. Plays an important role in initiating and maintaining hyperglycemic conditions in diabetes. In terms of biological role, potent stimulator of glucose-dependent insulin release. Also stimulates insulin release in response to IL6. Plays important roles on gastric motility and the suppression of plasma glucagon levels. May be involved in the suppression of satiety and stimulation of glucose disposal in peripheral tissues, independent of the actions of insulin. Has growth-promoting activities on intestinal epithelium. May also regulate the hypothalamic pituitary axis (HPA) via effects on LH, TSH, CRH, oxytocin, and vasopressin secretion. Increases islet mass through stimulation of islet neogenesis and pancreatic beta cell proliferation. Inhibits beta cell apoptosis. Stimulates intestinal growth and up-regulates villus height in the small intestine, concomitant with increased crypt cell proliferation and decreased enterocyte apoptosis. The gastrointestinal tract, from the stomach to the colon is the principal target for GLP-2 action. Plays a key role in nutrient homeostasis, enhancing nutrient assimilation through enhanced gastrointestinal function, as well as increasing nutrient disposal. Stimulates intestinal glucose transport and decreases mucosal permeability. Its function is as follows. Significantly reduces food intake. Inhibits gastric emptying in humans. Suppression of gastric emptying may lead to increased gastric distension, which may contribute to satiety by causing a sensation of fullness. Functionally, may modulate gastric acid secretion and the gastro-pyloro-duodenal activity. May play an important role in intestinal mucosal growth in the early period of life. The chain is Pro-glucagon from Homo sapiens (Human).